Here is a 503-residue protein sequence, read N- to C-terminus: Nondiscriminating glutamyl-tRNA synthetase EARS2, mitochondrial (503 aa).

The transit peptide at 1–22 directs the protein to the mitochondrion; sequence MKILRGVSRQMCTSRPEVRVRF. Residue 21 to 23 participates in L-glutamate binding; that stretch reads RFA. Positions 26-34 match the 'HIGH' region motif; the sequence is PTGFLHLGG. An ATP-binding site is contributed by His31. Residues Glu57, 209-213, and Arg227 each bind L-glutamate; that span reads YHLAS. Residues Glu230 and 265 to 269 contribute to the ATP site; that span reads KLSKR. The 'KMSKS' region motif lies at 265–269; sequence KLSKR.

The protein belongs to the class-I aminoacyl-tRNA synthetase family. Glutamate--tRNA ligase type 1 subfamily.

Its subcellular location is the mitochondrion matrix. The enzyme catalyses tRNA(Glx) + L-glutamate + ATP = L-glutamyl-tRNA(Glx) + AMP + diphosphate. The catalysed reaction is tRNA(Glu) + L-glutamate + ATP = L-glutamyl-tRNA(Glu) + AMP + diphosphate. It carries out the reaction tRNA(Gln) + L-glutamate + ATP = L-glutamyl-tRNA(Gln) + AMP + diphosphate. Its function is as follows. Non-discriminating glutamyl-tRNA synthetase that catalyzes aminoacylation of both mitochondrial tRNA(Glu) and tRNA(Gln) and participates in RNA aminoacylation for mitochondrial protein translation. Attachs glutamate to tRNA(Glu) or tRNA(Gln) in a two-step reaction: glutamate is first activated by ATP to form Glu-AMP and then transferred to the acceptor end of tRNA(Glu) or tRNA(Gln). In Danio rerio (Zebrafish), this protein is Nondiscriminating glutamyl-tRNA synthetase EARS2, mitochondrial.